Consider the following 300-residue polypeptide: Ribonuclease HIII (300 aa).

The RNase H type-2 domain maps to Ile-83–Lys-300. A divalent metal cation contacts are provided by Asp-89, Glu-90, and Asp-194.

It belongs to the RNase HII family. RnhC subfamily. It depends on Mn(2+) as a cofactor. Mg(2+) is required as a cofactor.

It is found in the cytoplasm. It carries out the reaction Endonucleolytic cleavage to 5'-phosphomonoester.. In terms of biological role, endonuclease that specifically degrades the RNA of RNA-DNA hybrids. In Streptococcus pyogenes serotype M4 (strain MGAS10750), this protein is Ribonuclease HIII.